The chain runs to 42 residues: Tachystatin-B2 (42 aa).

Cystine bridges form between Cys-4/Cys-20, Cys-11/Cys-25, and Cys-19/Cys-37.

In terms of tissue distribution, granular hemocytes, small secretory granules.

The protein resides in the secreted. Its function is as follows. Exhibits stronger antimicrobial activity against the Gram-positive bacteria (S.aureus (IC(50) is 7.4 ug/ml)) and fungi (C.albicans (IC(50) is 3.0 ug/ml) and P.pastoris (IC(50) is 0.1 ug/ml)) than Gram-negative bacteria (E.coli no inhibition at 100 ug/ml). Binds to chitin (4.3 uM are required to obtain 50% of binding). Does not cause hemolysis on sheep erythrocytes. Has no blocking activity on the P-type calcium channel. This chain is Tachystatin-B2, found in Tachypleus tridentatus (Japanese horseshoe crab).